A 548-amino-acid chain; its full sequence is Cytochrome P450 monooxygenase hepE (548 aa).

Heme is bound at residue Cys-485.

This sequence belongs to the cytochrome P450 family. Requires heme as cofactor.

Its pathway is secondary metabolite biosynthesis. In terms of biological role, cytochrome P450 monooxygenase; part of the gene cluster that mediates the biosynthesis of heptelidic acid (HA), a sesquiterpene lactone that acts as an inhibitor of glyceraldehyde-3-phosphatedehydrogenase (GAPDH) and a growth inhibitor of the salt-tolerant lactic acid bacteria in soy sauce brewing. The polypeptide is Cytochrome P450 monooxygenase hepE (Aspergillus oryzae (strain ATCC 42149 / RIB 40) (Yellow koji mold)).